The chain runs to 227 residues: Germin-like protein 3-3 (227 aa).

The signal sequence occupies residues 1–26 (MECFKTTLAGVVLVVLLLQQAPVLRA). C36 and C51 are disulfide-bonded. Residues 65-217 (SRLATGGDVN…ALRVDAGVVE (153 aa)) form the Cupin type-1 domain. N-linked (GlcNAc...) asparagine glycosylation is found at N78 and N81. 4 residues coordinate Mn(2+): H114, H116, E121, and H163.

It belongs to the germin family. As to quaternary structure, oligomer (believed to be a pentamer but probably hexamer).

Its subcellular location is the secreted. It localises to the extracellular space. The protein resides in the apoplast. May play a role in plant defense. Probably has no oxalate oxidase activity even if the active site is conserved. The sequence is that of Germin-like protein 3-3 from Oryza sativa subsp. japonica (Rice).